The primary structure comprises 313 residues: Biotin synthase (313 aa).

Residues 28 to 258 (NFGNDIELCS…LFPQARLRLS (231 aa)) form the Radical SAM core domain. [4Fe-4S] cluster is bound by residues C46, C50, and C53. Residues C90, C121, C181, and R256 each contribute to the [2Fe-2S] cluster site.

This sequence belongs to the radical SAM superfamily. Biotin synthase family. In terms of assembly, homodimer. [4Fe-4S] cluster serves as cofactor. It depends on [2Fe-2S] cluster as a cofactor.

The catalysed reaction is (4R,5S)-dethiobiotin + (sulfur carrier)-SH + 2 reduced [2Fe-2S]-[ferredoxin] + 2 S-adenosyl-L-methionine = (sulfur carrier)-H + biotin + 2 5'-deoxyadenosine + 2 L-methionine + 2 oxidized [2Fe-2S]-[ferredoxin]. The protein operates within cofactor biosynthesis; biotin biosynthesis; biotin from 7,8-diaminononanoate: step 2/2. Its function is as follows. Catalyzes the conversion of dethiobiotin (DTB) to biotin by the insertion of a sulfur atom into dethiobiotin via a radical-based mechanism. This Francisella tularensis subsp. holarctica (strain FTNF002-00 / FTA) protein is Biotin synthase.